Consider the following 663-residue polypeptide: MHHLKSPKNVSSVCFLQSARDCARLTGQTLHTMELFRPLRNIWNRAREYARAAISAAGISWMSRHVYRYPTLMLRNLGARQPATQNWPLYLYPPPHFLIGYQYVVRVCNDYVFETRAYSRLVYRETVRLDQQIVDWSTMANCSYTINAGAYHRFIDLENFDETLRQIQQAVLAERVVADLALIQPLRGFGRTEMADLPPQRRNVPVERFLQEQCMNLGECQDQAWGFANRIRIQQAGRRDLIILTTIRRLRCAYFNFLLSHPPPNRNNTERASPMLSLPCDCDWLEAFVQRFSDPVDAQSLRFETAASTERVVAHVIDALSLPQPAARPLTELRGGAFELRPREHGRAVTQEMRIRRGEMVQRFIESLPLPTRRRRVARPAPPSPSPSPEPVELEMPPLEGEEEEEEEELPPRSFAEEVRAAVAEVIRLLQEELTVSARNEQFFNFAVDFYEAINMLEREGNINESTIRRWVIYFFIVEHIATTLNYLHHHLRLSPVFARHVELNLGQVVMRARDEDGAVIYSRVWNEPGTNAFSQLMRRISTDLAATVHRAGRGELDEEEIERFMTDIAYRDHSGDVEEIIRQAELNDASINSVDLSFRFKVTGPVAFTQHPEIQRINRRVVQHASDLRQQLQPMPELNDPVQLPPLRPERQRPPLGPRRPL.

Residues 367–376 carry the Nuclear localization signal motif; the sequence is SLPLPTRRRR. The disordered stretch occupies residues 374–414; sequence RRRVARPAPPSPSPSPEPVELEMPPLEGEEEEEEEELPPRS. Residues 380–390 are compositionally biased toward pro residues; it reads PAPPSPSPSPE. Acidic residues predominate over residues 400 to 409; sequence EGEEEEEEEE. Serine 575 carries the post-translational modification O-(5'-phospho-DNA)-serine. Positions 632–663 are disordered; it reads QLQPMPELNDPVQLPPLRPERQRPPLGPRRPL.

This sequence belongs to the adenoviridae terminal protein family. Heterodimer with the polymerase; this heterodimer binds to bp 9 to 18 of the genome. Interacts with host POU2F1; POU2F1 binds to the auxiliary sequences in the inverted terminal repeats and tethers the pTP-POL heterodimer to the origin DNA thereby participating in the assembly of the pre-initiation complex (POL-TP-DBP-NFIA-POU2F1). Post-translationally, preterminal protein is used to replicate viral genome, upon genomic encapsidation it is processed first into iTP and finally into TP by adenovirus protease.

The protein resides in the host nucleus matrix. Functionally, protein covalently bound to the viral DNA that acts as a primer for viral genomic replication by DNA strand displacement. Assembles on the viral origin of replication in an initiation complex with viral polymerase, DBP, host NFIA and host POU2F1/OCT1. During initiation, the polymerase covalently couples the first dCTP with Ser-580 of pTP. The terminal protein stimulates the template activity over 20 fold compared to protein-free templates. Neo-synthesized viral genomes are linked to two preterminal proteins, one for each 5' end. These new genomes are encapsidated in the nucleus, and during capsid maturation by viral protease, preterminal protein is first cleaved into intermediary (iTP), then into mature TP. May play a role in host nuclear matrix localization of genomic DNA. This chain is Preterminal protein, found in Bos taurus (Bovine).